The chain runs to 1338 residues: Thioester-containing protein 1 allele R1 (1338 aa).

The N-terminal stretch at 1–21 is a signal peptide; it reads MWQFIRSRILTVIIFIGAAHG. 5 N-linked (GlcNAc...) asparagine glycosylation sites follow: Asn-68, Asn-199, Asn-242, Asn-312, and Asn-481. Residues 580–609 are may contain the cleavage site; the sequence is ENEFDIFHSLGLFARTLDDILFDSANEKTG. 3 N-linked (GlcNAc...) asparagine glycosylation sites follow: Asn-637, Asn-728, and Asn-813. Positions 859–862 form a cross-link, isoglutamyl cysteine thioester (Cys-Gln); that stretch reads CGEQ. 2 N-linked (GlcNAc...) asparagine glycosylation sites follow: Asn-919 and Asn-1065. Cystine bridges form between Cys-1217–Cys-1283, Cys-1326–Cys-1338, and Cys-1329–Cys-1334.

Heterodimer of a TEP1-N chain and an TEP1-C chain non-covalently linked. Forms a complex composed of TEP1-N and TEP1-C heterodimer, LRIM1 and APL1C; the interaction stabilizes TEP1-N and TEP1-C heterodimer, prevents its binding to tissues while circulating in the hemolymph and protects the thioester bond from hydrolysis. Mature TEP1 and to a lesser extent full-length TEP1 interact with SPCLIP1; the interaction is induced by microbial infection. In terms of processing, in the hemolymph, the full-length protein is cleaved by an unknow protease into a 75kDa N-terminal (TEP1-N) chain and an 80kDa C-terminal (TEP1-C) chain which remain non-covalently linked. The TEP1-C chain contains the thioester bond which covalently binds to the pathogen surface. Cleavage is induced by bacterial infection or aseptic wound injury. During embryonic and pupal development, the cleaved form is the predominant form. N-glycosylated.

The protein localises to the secreted. Plays an essential role in the innate immune response against bacteria, fungi and protozoa infection. After proteolytic cleavage, the protein C-terminus binds covalently through a thioester bond to the pathogen surface resulting in pathogen clearance either by melanization or lysis. Initiate the recruitment and activation of a cascade of proteases, mostly of CLIP-domain serine proteases, which leads to the proteolytic cleavage of the prophenoloxidase (PPO) into active phenoloxidase (PO), the rate-limiting enzyme in melanin biosynthesis. In response to parasite P.berghei-mediated infection, binds to and mediates killing of ookinetes, as they egress from midgut epithelial cells into the basal labyrinth, by both lysis and melanization. During bacterial infection, binds to both Gram-positive and Gram-negative bacteria but only promotes phagocytosis of Gram-negative bacteria. Promotes the accumulation of SPCLIP1 onto the surface of P.berghei ookinetes and bacterium E.coli which leads to the melanization of the pathogen. Recruits CLIPA2 to bacteria surface. In response to bacterial infection, required for periostial hemocyte aggregation, but not for the aggregation of sessile hemocytes in non-periostial regions. During the late stage of fungus B.bassiana-mediated infection, required for the initiation of hyphae melanization by binding to the surface of hyphae and recruiting prophenoloxidase PPO to them. Plays a role in male fertility by binding to defective sperm cells and promoting their removal during spermatogenesis. In terms of biological role, binds to and mediates killing of parasite P.bergei ookinetes by lysis and melanization. Functionally, binds covalently through a thioester bond to the pathogen surface resulting in pathogen clearance. In Anopheles gambiae (African malaria mosquito), this protein is Thioester-containing protein 1 allele R1.